Here is a 24-residue protein sequence, read N- to C-terminus: Fraternine (24 aa).

Cysteines 11 and 24 form a disulfide. The residue at position 24 (cysteine 24) is a Cysteine amide.

In terms of tissue distribution, expressed by the venom gland.

Its subcellular location is the secreted. In terms of biological role, wasp venom peptide that acts as a potent mast cell degranulating peptide without hemolytic activity. Shows neuroprotective effect, since it prevents the death of dopaminergic neurons of the brain substantia nigra region and recovers motor deficit in a 6-hydroxydopamine (6-OHDA)-induced murine model of Parkinson disease. The protein is Fraternine of Parachartergus fraternus (Artistic wasp).